The primary structure comprises 366 residues: Neutral protease 2 homolog MGYG_04094 (366 aa).

Residues 1-19 form the signal peptide; that stretch reads MQILAALSAIGALVATATA. Positions 20–188 are excised as a propeptide; the sequence is AAVPNAPAKQ…NKSRSTIDKR (169 aa). Cystine bridges form between Cys-196–Cys-267 and Cys-274–Cys-292. His-317 contributes to the Zn(2+) binding site. Residue Glu-318 is part of the active site. Zn(2+)-binding residues include His-321 and Asp-332.

It belongs to the peptidase M35 family. Zn(2+) is required as a cofactor.

It localises to the secreted. The enzyme catalyses Preferential cleavage of bonds with hydrophobic residues in P1'. Also 3-Asn-|-Gln-4 and 8-Gly-|-Ser-9 bonds in insulin B chain.. In terms of biological role, secreted metalloproteinase that allows assimilation of proteinaceous substrates. Shows high activities on basic nuclear substrates such as histone and protamine. May be involved in virulence. The chain is Neutral protease 2 homolog MGYG_04094 from Arthroderma gypseum (strain ATCC MYA-4604 / CBS 118893) (Microsporum gypseum).